Reading from the N-terminus, the 219-residue chain is Guanylate kinase (219 aa).

In terms of domain architecture, Guanylate kinase-like spans 15–194 (GLMFVLSSPS…AFAEVQSILK (180 aa)). 22-29 (SPSGAGKT) contacts ATP.

The protein belongs to the guanylate kinase family.

The protein localises to the cytoplasm. The catalysed reaction is GMP + ATP = GDP + ADP. Essential for recycling GMP and indirectly, cGMP. This chain is Guanylate kinase, found in Nitrobacter winogradskyi (strain ATCC 25391 / DSM 10237 / CIP 104748 / NCIMB 11846 / Nb-255).